Here is a 41-residue protein sequence, read N- to C-terminus: Photosystem II reaction center protein L (41 aa).

Residues 20–40 traverse the membrane as a helical segment; it reads SLYLGLLLVFVVGLLFSSYFL.

This sequence belongs to the PsbL family. In terms of assembly, PSII is composed of 1 copy each of membrane proteins PsbA, PsbB, PsbC, PsbD, PsbE, PsbF, PsbH, PsbI, PsbJ, PsbK, PsbL, PsbM, PsbT, PsbX, PsbY, PsbZ, Psb30/Ycf12, peripheral proteins PsbO, CyanoQ (PsbQ), PsbU, PsbV and a large number of cofactors. It forms dimeric complexes.

It localises to the cellular thylakoid membrane. Functionally, one of the components of the core complex of photosystem II (PSII). PSII is a light-driven water:plastoquinone oxidoreductase that uses light energy to abstract electrons from H(2)O, generating O(2) and a proton gradient subsequently used for ATP formation. It consists of a core antenna complex that captures photons, and an electron transfer chain that converts photonic excitation into a charge separation. This subunit is found at the monomer-monomer interface and is required for correct PSII assembly and/or dimerization. This Synechococcus sp. (strain JA-2-3B'a(2-13)) (Cyanobacteria bacterium Yellowstone B-Prime) protein is Photosystem II reaction center protein L.